The following is a 92-amino-acid chain: uncharacterized protein (92 aa).

This is an uncharacterized protein from Methanocaldococcus jannaschii (strain ATCC 43067 / DSM 2661 / JAL-1 / JCM 10045 / NBRC 100440) (Methanococcus jannaschii).